Consider the following 49-residue polypeptide: Large ribosomal subunit protein bL33B (49 aa).

The protein belongs to the bacterial ribosomal protein bL33 family.

The chain is Large ribosomal subunit protein bL33B from Staphylococcus saprophyticus subsp. saprophyticus (strain ATCC 15305 / DSM 20229 / NCIMB 8711 / NCTC 7292 / S-41).